The chain runs to 296 residues: MSSLRQIAFYGKGGIGKSTTSQNTLAALAEMGHRILIVGCDPKADSTRLILHAKAQDTILSLAAAAGSVEDLELEEVMKIGYRDIRCVESGGPEPGVGCAGRGVITSINFLEENGAYEDIDYVSYDVLGDVVCGGFAMPIRENKAQEIYIVMSGEMMAMYAANNISKGILKYANSGGVRLGGLVCNERQTDKELELAENLAKKLGTQLIYFVPRDNIVQHAELRRMTVIEYAPDSVQANHYRNLAERVHNNGGKGIIPTPITMDELEDMLMEHGIMKTVDETQVGKTAAELAALSA.

An ATP-binding site is contributed by 11–18 (GKGGIGKS). Cys-99 contributes to the [4Fe-4S] cluster binding site. Position 102 is an ADP-ribosylarginine; by dinitrogenase reductase ADP-ribosyltransferase (Arg-102). Cys-133 lines the [4Fe-4S] cluster pocket.

The protein belongs to the NifH/BchL/ChlL family. As to quaternary structure, homodimer. It depends on [4Fe-4S] cluster as a cofactor. The reversible ADP-ribosylation of Arg-102 inactivates the nitrogenase reductase and regulates nitrogenase activity.

The enzyme catalyses N2 + 8 reduced [2Fe-2S]-[ferredoxin] + 16 ATP + 16 H2O = H2 + 8 oxidized [2Fe-2S]-[ferredoxin] + 2 NH4(+) + 16 ADP + 16 phosphate + 6 H(+). In terms of biological role, the key enzymatic reactions in nitrogen fixation are catalyzed by the nitrogenase complex, which has 2 components: the iron protein and the molybdenum-iron protein. The sequence is that of Nitrogenase iron protein 1 (nifH1) from Azorhizobium caulinodans (strain ATCC 43989 / DSM 5975 / JCM 20966 / LMG 6465 / NBRC 14845 / NCIMB 13405 / ORS 571).